Reading from the N-terminus, the 519-residue chain is Glutamate--cysteine ligase (519 aa).

This sequence belongs to the glutamate--cysteine ligase type 1 family. Type 1 subfamily.

The enzyme catalyses L-cysteine + L-glutamate + ATP = gamma-L-glutamyl-L-cysteine + ADP + phosphate + H(+). The protein operates within sulfur metabolism; glutathione biosynthesis; glutathione from L-cysteine and L-glutamate: step 1/2. In Yersinia enterocolitica serotype O:8 / biotype 1B (strain NCTC 13174 / 8081), this protein is Glutamate--cysteine ligase.